We begin with the raw amino-acid sequence, 563 residues long: Germacrene C/D synthase (563 aa).

The segment at methionine 1–arginine 22 is disordered. Residues aspartate 315, aspartate 319, and glutamate 468 each contribute to the Mg(2+) site. The DDXXD motif motif lies at aspartate 315 to aspartate 319.

Belongs to the terpene synthase family. Requires Mg(2+) as cofactor. Predominantly expressed in root.

It carries out the reaction (2E,6E)-farnesyl diphosphate = germacrene C + diphosphate. It catalyses the reaction (2E,6E)-farnesyl diphosphate = (-)-germacrene D + diphosphate. In terms of biological role, mediates formation of germacrene C and germacrene D using farnesyl diphosphate as substrate. Can also catalyze formation of trace of germacrene B. The protein is Germacrene C/D synthase (TPS1) of Valeriana officinalis (Valerian).